Consider the following 188-residue polypeptide: Elongation factor P (188 aa).

The protein belongs to the elongation factor P family.

The protein localises to the cytoplasm. It functions in the pathway protein biosynthesis; polypeptide chain elongation. Functionally, involved in peptide bond synthesis. Stimulates efficient translation and peptide-bond synthesis on native or reconstituted 70S ribosomes in vitro. Probably functions indirectly by altering the affinity of the ribosome for aminoacyl-tRNA, thus increasing their reactivity as acceptors for peptidyl transferase. The chain is Elongation factor P from Acidiphilium cryptum (strain JF-5).